Reading from the N-terminus, the 250-residue chain is 2,3-bisphosphoglycerate-dependent phosphoglycerate mutase (250 aa).

Residues 10–17 (RHGESQWN), 23–24 (TG), Arg-62, 89–92 (ERHY), Lys-100, 116–117 (RR), and 185–186 (GN) each bind substrate. The active-site Tele-phosphohistidine intermediate is the His-11. Glu-89 acts as the Proton donor/acceptor in catalysis.

This sequence belongs to the phosphoglycerate mutase family. BPG-dependent PGAM subfamily. Homodimer.

It carries out the reaction (2R)-2-phosphoglycerate = (2R)-3-phosphoglycerate. It participates in carbohydrate degradation; glycolysis; pyruvate from D-glyceraldehyde 3-phosphate: step 3/5. Its function is as follows. Catalyzes the interconversion of 2-phosphoglycerate and 3-phosphoglycerate. This chain is 2,3-bisphosphoglycerate-dependent phosphoglycerate mutase, found in Pectobacterium carotovorum subsp. carotovorum (strain PC1).